The following is a 340-amino-acid chain: Protein-arginine kinase (340 aa).

The region spanning 21–242 (VVLSSRIRLA…EQIIMQERVA (222 aa)) is the Phosphagen kinase C-terminal domain. Residues 24–28 (SSRIR), His79, Arg113, 164–168 (RASVM), and 195–200 (RGIYGE) each bind ATP.

This sequence belongs to the ATP:guanido phosphotransferase family.

It catalyses the reaction L-arginyl-[protein] + ATP = N(omega)-phospho-L-arginyl-[protein] + ADP + H(+). Catalyzes the specific phosphorylation of arginine residues in proteins. This chain is Protein-arginine kinase, found in Listeria monocytogenes serovar 1/2a (strain ATCC BAA-679 / EGD-e).